Here is a 147-residue protein sequence, read N- to C-terminus: Chorion class B protein B.L1 (147 aa).

The left arm stretch occupies residues 1–38; sequence IGCGRGCGGRGYGGLGYGGLGYGGLGYGGLGGGCGRGF. 4 consecutive repeat copies span residues 11-15, 16-20, 21-25, and 26-30. Residues 11–30 are 4 X 5 AA tandem repeats of G-Y-G-G-L; that stretch reads GYGGLGYGGLGYGGLGYGGL. The interval 39–107 is central domain; the sequence is SGGGLPVATA…GNGAVGITRE (69 aa). A right arm (Gly-rich tandem repeats) region spans residues 108–147; the sequence is GGLGYGAGYGGGYGLGYGGYGGGYGLGYGGYGGCGCGCGY.

It belongs to the chorion protein family.

Its function is as follows. This protein is one of many from the eggshell of the silk moth. In Bombyx mori (Silk moth), this protein is Chorion class B protein B.L1.